The following is a 666-amino-acid chain: DNA ligase (666 aa).

NAD(+) contacts are provided by residues 34–38, 83–84, and Glu114; these read DEEYD and SL. Lys116 (N6-AMP-lysine intermediate) is an active-site residue. 4 residues coordinate NAD(+): Arg137, Glu174, Lys290, and Lys314. Zn(2+) contacts are provided by Cys408, Cys411, Cys424, and Cys429. The BRCT domain maps to 584 to 666; the sequence is SIEGPLKGLT…LKMVKREHNG (83 aa).

This sequence belongs to the NAD-dependent DNA ligase family. LigA subfamily. Mg(2+) is required as a cofactor. Mn(2+) serves as cofactor.

The catalysed reaction is NAD(+) + (deoxyribonucleotide)n-3'-hydroxyl + 5'-phospho-(deoxyribonucleotide)m = (deoxyribonucleotide)n+m + AMP + beta-nicotinamide D-nucleotide.. Its function is as follows. DNA ligase that catalyzes the formation of phosphodiester linkages between 5'-phosphoryl and 3'-hydroxyl groups in double-stranded DNA using NAD as a coenzyme and as the energy source for the reaction. It is essential for DNA replication and repair of damaged DNA. The protein is DNA ligase of Coprothermobacter proteolyticus (strain ATCC 35245 / DSM 5265 / OCM 4 / BT).